We begin with the raw amino-acid sequence, 165 residues long: Mitochondrial fission process protein 1 (165 aa).

Helical transmembrane passes span 35-55 (ALVPVGAVWASYGVATTYVTA), 76-96 (VCVCVAVVDTFVWQALASVAV), and 130-150 (IGLSTIPFIITPIDRSVDLLL).

Belongs to the MTFP1 family.

The protein localises to the mitochondrion inner membrane. Involved in the mitochondrial division probably by regulating membrane fission. Loss-of-function leads to apoptosis. This Danio rerio (Zebrafish) protein is Mitochondrial fission process protein 1 (mtfp1).